The following is a 420-amino-acid chain: MPHSLFSTDTDLTAENLLRLPAEFGCPVWVYDAQIIRRQIAALKQFDVVRFAQKACSNIHILRLMREQGVKVDSVSLGEIERALAAGYNPQTHPDDIVFTADVIDQATLERVSELQIPVNAGSVDMLDQLGQVSPGHRVWLRVNPGFGHGHSQKTNTGGENSKHGIWYTDLPAALDVIQRHHLQLVGIHMHIGSGVDYAHLEQVCGAMVRQVIEFGQDLQAISAGGGLSVPYQQGEEAVDTEHYYGLWNAAREQIARHLGHPVKLEIEPGRFLVAQSGVLITQVRSVKQMGSRHFVLVDAGFNDLMRPAMYGSYHHISALAADGRSLEHAPTVETVVAGPLCESGDVFTQQEGGNVETRALPEVKAGDYLVLHDTGAYGASMSSNYNSRPLLPEVLFDNGQARLIRRRQTIEELLALELL.

Lysine 54 carries the N6-(pyridoxal phosphate)lysine modification. Histidine 191 is a binding site for substrate. Pyridoxal 5'-phosphate is bound by residues glycine 227 and 268-271 (EPGR). The substrate site is built by arginine 271, arginine 307, and tyrosine 311. The Proton donor role is filled by cysteine 342. Glutamate 343 and tyrosine 378 together coordinate substrate. Pyridoxal 5'-phosphate is bound at residue tyrosine 378.

Belongs to the Orn/Lys/Arg decarboxylase class-II family. LysA subfamily. Pyridoxal 5'-phosphate is required as a cofactor.

It catalyses the reaction meso-2,6-diaminopimelate + H(+) = L-lysine + CO2. Its pathway is amino-acid biosynthesis; L-lysine biosynthesis via DAP pathway; L-lysine from DL-2,6-diaminopimelate: step 1/1. Its activity is regulated as follows. Is activated by 2,3-dimercaptopropan-1-ol. Functionally, specifically catalyzes the decarboxylation of meso-diaminopimelate (meso-DAP) to L-lysine. Is not active against the DD- or LL-isomers of diaminopimelate. This chain is Diaminopimelate decarboxylase, found in Escherichia coli (strain K12).